Consider the following 400-residue polypeptide: MIIKPRVRGFICVTTHPVGCEANVKEQIDYVTSHGPIANGPKKVLVIGASTGYGLAARISAAFGSGADTLGVFFERAGGETKPGTAGWYNSAAFEKFAAEKGRYARSINGDAFSDKVKQVTIDTIKQDLGKVDLVVYSLAAPRRTHPKTGETISSTLKPVGKAVTFRGLDTDKEVIREVSLEPATQEEIDGTVAVMGGEDWQMWIDALDEAGVLADGAKTTAFTYLGEQITHDIYWNGSIGEAKKDLDKKVLSIRDKLAAHGGDARVSVLKAVVTQASSAIPMMPLYLSLLFKVMKEQGTHEGCIEQVYGLLKDSLYGATPHVDEEGRLRADYKELDPQVQGKVVAMWDKVTNENLYEMTDFAGYKTEFLRLFGFEIAGVDYDADVNPDVKIPGIIDTTV.

NAD(+) is bound by residues 48 to 53 (GASTGY), 74 to 75 (FE), 111 to 112 (DA), and 139 to 140 (LA). Tyr-225 contributes to the substrate binding site. The active-site Proton donor is the Tyr-235. NAD(+)-binding positions include Lys-244 and 273 to 275 (VVT).

It belongs to the TER reductase family. As to quaternary structure, monomer.

It catalyses the reaction a 2,3-saturated acyl-[ACP] + NAD(+) = a (2E)-enoyl-[ACP] + NADH + H(+). It functions in the pathway lipid metabolism; fatty acid biosynthesis. Its function is as follows. Involved in the final reduction of the elongation cycle of fatty acid synthesis (FAS II). Catalyzes the reduction of a carbon-carbon double bond in an enoyl moiety that is covalently linked to an acyl carrier protein (ACP). The protein is Enoyl-[acyl-carrier-protein] reductase [NADH] of Burkholderia ambifaria (strain MC40-6).